We begin with the raw amino-acid sequence, 561 residues long: MVKIKVRSSAWYDGVDNASHRSYLRAVGFTEEDFAKPLVGVLAAWSELGPCNYHTLDLARYVKEGVKEAGGVGLTAPTIVVNDGINMGTPGMRYSLISRDLIADTIEAQFNAHGVDAWVGIGGCDKTQPGIMMAMVRLDLPAVYLYGGTAEAGWLGERELTIEDTFEAVGSYLAGKITLEELKRIEELSFPTYGTCQGLFTANTMAMLSEALGLALLGSASPPATSARRRAYAVASGRAVLKAAELGVTPRRVVTYDAIYNAAVTLFATAGSTNAILHLLAIAHEAGVKFTLDDFDEISRRVPVIAALRPAGPYAMQDLDRIGGVPRILKKLYKAGFLRPEALTVEGETIGKLLERWQPPAVPEDGILYSVEKPYKPYSGIRILRGNLAPDGAVMKIGAADKLKFEGTAKVYNGEAEAFKAVAAGEIKPGDVVVIRYEGPKGAPGMPEMLKVTAAIVGAGLGEAVALVTDGRFSGATRGIMVGHVAPEAAVGGPIALVENGDKIAIDGETGRITLQIPQEELERRRKNWTPPPPKYSGGLLAKYAALVQQADKGAVTTPPR.

Residue C51 participates in [2Fe-2S] cluster binding. A Mg(2+)-binding site is contributed by D83. C124 provides a ligand contact to [2Fe-2S] cluster. Mg(2+)-binding residues include D125 and K126. K126 is subject to N6-carboxylysine. Residue C196 coordinates [2Fe-2S] cluster. Residue E448 coordinates Mg(2+). Catalysis depends on S474, which acts as the Proton acceptor.

The protein belongs to the IlvD/Edd family. In terms of assembly, homodimer. The cofactor is [2Fe-2S] cluster. Mg(2+) is required as a cofactor.

It catalyses the reaction (2R)-2,3-dihydroxy-3-methylbutanoate = 3-methyl-2-oxobutanoate + H2O. It carries out the reaction (2R,3R)-2,3-dihydroxy-3-methylpentanoate = (S)-3-methyl-2-oxopentanoate + H2O. It functions in the pathway amino-acid biosynthesis; L-isoleucine biosynthesis; L-isoleucine from 2-oxobutanoate: step 3/4. The protein operates within amino-acid biosynthesis; L-valine biosynthesis; L-valine from pyruvate: step 3/4. Functionally, functions in the biosynthesis of branched-chain amino acids. Catalyzes the dehydration of (2R,3R)-2,3-dihydroxy-3-methylpentanoate (2,3-dihydroxy-3-methylvalerate) into 2-oxo-3-methylpentanoate (2-oxo-3-methylvalerate) and of (2R)-2,3-dihydroxy-3-methylbutanoate (2,3-dihydroxyisovalerate) into 2-oxo-3-methylbutanoate (2-oxoisovalerate), the penultimate precursor to L-isoleucine and L-valine, respectively. This chain is Dihydroxy-acid dehydratase, found in Pyrobaculum neutrophilum (strain DSM 2338 / JCM 9278 / NBRC 100436 / V24Sta) (Thermoproteus neutrophilus).